Here is a 179-residue protein sequence, read N- to C-terminus: HTH-type transcriptional regulator AldR (179 aa).

An HTH asnC-type domain is found at 32-93; that stretch reads LDEVDRRILS…DIDPVAVGLP (62 aa). A DNA-binding region (H-T-H motif) is located at residues 51 to 70; that stretch reads NNALADTVGIAPSTCHGRVR.

In terms of assembly, homooctamer. Homotetramer. Tetramer of dimers. The N-terminal DNA-binding domains are swapped, forming a dimer, and four dimers are assembled into an octamer through crystal symmetry.

The DNA-binding activity of AldR is modulated by interaction of AldR with various amino acids. Alanine, tryptophan, tyrosine and aspartate completely abolish the DNA binding ability of AldR. On the other hand, glutamate and asparagine reduce AldR binding to DNA but do not completely abolish it. Binding of amino acids can lead to structural modifications and changes in oligomeric association. Activity is also inhibited by 3 small molecule inhibitors, tetrahydroquinoline carbonitrile derivative (S010-0261), levothyroxine and liothyronine, which can disrupt the AldR-DNA complex. Its function is as follows. Transcriptional regulator that might play a role under hypoxic conditions. Regulates the expression of ald, which encodes L-alanine dehydrogenase. Serves as both an activator for ald expression in the presence of L-alanine and a repressor in the absence of L-alanine. Acts by binding directly to the upstream region of the ald gene. Four AldR-binding sites (O2, O1, O4 and O3) were identified upstream of the ald gene. O2, O1 and O4 are required for the induction of ald expression by alanine, while O3 is directly involved in the repression of ald expression, by occluding the access of RNA polymerase to the ald promoter. In addition to O3, both O1 and O4 are also necessary for full repression of ald expression in the absence of alanine. The chain is HTH-type transcriptional regulator AldR from Mycobacterium tuberculosis (strain ATCC 25618 / H37Rv).